Reading from the N-terminus, the 592-residue chain is Delta-like protein 3 (592 aa).

The N-terminal stretch at Met1–Ile32 is a signal peptide. Topologically, residues His33–Leu490 are extracellular. In terms of domain architecture, DSL spans Ala174 to Glu213. EGF-like domains lie at Ala214 to Thr247, Gly272 to Glu308, Ser310 to Glu349, Arg351 to Glu387, Asp389 to Arg425, and Arg427 to Glu463. Disulfide bonds link Cys218/Cys229, Cys222/Cys235, Cys237/Cys246, Cys276/Cys287, Cys281/Cys296, Cys298/Cys307, Cys314/Cys325, Cys319/Cys337, Cys339/Cys348, Cys355/Cys366, Cys360/Cys375, Cys377/Cys386, Cys393/Cys404, Cys398/Cys413, Cys415/Cys424, Cys431/Cys442, Cys436/Cys451, and Cys453/Cys462. The helical transmembrane segment at Leu491–Ile511 threads the bilayer. At His512–Phe592 the chain is on the cytoplasmic side. The disordered stretch occupies residues Gln548–Gly567.

Can bind and activate Notch-1 or another Notch receptor. In terms of processing, ubiquitinated by MIB (MIB1 or MIB2), leading to its endocytosis and subsequent degradation. In terms of tissue distribution, predominantly expressed in the neuroectoderm and paraxial mesoderm during embryogenesis.

It is found in the membrane. In terms of biological role, inhibits primary neurogenesis. May be required to divert neurons along a specific differentiation pathway. Plays a role in the formation of somite boundaries during segmentation of the paraxial mesoderm. The chain is Delta-like protein 3 (Dll3) from Mus musculus (Mouse).